Here is a 579-residue protein sequence, read N- to C-terminus: A-type ATP synthase subunit A (579 aa).

229-236 contacts ATP; sequence GPFGSGKT.

It belongs to the ATPase alpha/beta chains family. In terms of assembly, has multiple subunits with at least A(3), B(3), C, D, E, F, H, I and proteolipid K(x).

The protein localises to the cell membrane. It carries out the reaction ATP + H2O + 4 H(+)(in) = ADP + phosphate + 5 H(+)(out). Its function is as follows. Component of the A-type ATP synthase that produces ATP from ADP in the presence of a proton gradient across the membrane. The A chain is the catalytic subunit. The sequence is that of A-type ATP synthase subunit A from Methanocella arvoryzae (strain DSM 22066 / NBRC 105507 / MRE50).